The chain runs to 138 residues: uncharacterized protein (138 aa).

3 helical membrane-spanning segments follow: residues I17–F37, F43–C63, and F117–L137.

The protein localises to the cell membrane. This is an uncharacterized protein from Mycoplasma genitalium (strain ATCC 33530 / DSM 19775 / NCTC 10195 / G37) (Mycoplasmoides genitalium).